Here is a 316-residue protein sequence, read N- to C-terminus: 2,3-dihydroxyphenylpropionate/2,3-dihydroxicinnamic acid 1,2-dioxygenase (316 aa).

Histidine 115 acts as the Proton donor in catalysis. Histidine 179 acts as the Proton acceptor in catalysis.

The protein belongs to the LigB/MhpB extradiol dioxygenase family. In terms of assembly, homotetramer. It depends on Fe(2+) as a cofactor.

The enzyme catalyses 3-(2,3-dihydroxyphenyl)propanoate + O2 = (2Z,4E)-2-hydroxy-6-oxonona-2,4-dienedioate + H(+). The catalysed reaction is (2E)-3-(2,3-dihydroxyphenyl)prop-2-enoate + O2 = (2Z,4E,7E)-2-hydroxy-6-oxonona-2,4,7-trienedioate + H(+). It participates in aromatic compound metabolism; 3-phenylpropanoate degradation. Functionally, catalyzes the non-heme iron(II)-dependent oxidative cleavage of 2,3-dihydroxyphenylpropionic acid and 2,3-dihydroxicinnamic acid into 2-hydroxy-6-ketononadienedioate and 2-hydroxy-6-ketononatrienedioate, respectively. This Paraburkholderia xenovorans (strain LB400) protein is 2,3-dihydroxyphenylpropionate/2,3-dihydroxicinnamic acid 1,2-dioxygenase.